Reading from the N-terminus, the 72-residue chain is Large ribosomal subunit protein bL28 (72 aa).

It belongs to the bacterial ribosomal protein bL28 family.

This Chlorobium limicola (strain DSM 245 / NBRC 103803 / 6330) protein is Large ribosomal subunit protein bL28.